We begin with the raw amino-acid sequence, 279 residues long: Shikimate dehydrogenase (NADP(+)) (279 aa).

Shikimate is bound by residues 19-21 (SRS) and Thr-66. Residue Lys-70 is the Proton acceptor of the active site. The shikimate site is built by Asn-91 and Asp-106. Residues 129-133 (GAGGA), 152-157 (NRTLER), and Ile-218 each bind NADP(+). Position 220 (Tyr-220) interacts with shikimate. Residue Gly-241 coordinates NADP(+).

The protein belongs to the shikimate dehydrogenase family. Homodimer.

The catalysed reaction is shikimate + NADP(+) = 3-dehydroshikimate + NADPH + H(+). It participates in metabolic intermediate biosynthesis; chorismate biosynthesis; chorismate from D-erythrose 4-phosphate and phosphoenolpyruvate: step 4/7. Its function is as follows. Involved in the biosynthesis of the chorismate, which leads to the biosynthesis of aromatic amino acids. Catalyzes the reversible NADPH linked reduction of 3-dehydroshikimate (DHSA) to yield shikimate (SA). In Gluconobacter oxydans (strain 621H) (Gluconobacter suboxydans), this protein is Shikimate dehydrogenase (NADP(+)).